The following is a 551-amino-acid chain: Tetrachloroethene reductive dehalogenase (551 aa).

A signal peptide (tat-type signal) is located at residues 1-39 (MGEINRRNFLKVSILGAAAAAVASASAVKGMVSPLVADA). The region spanning 411–440 (PRKFGVREFCRLCKKCADACPAQAISHEKD) is the 4Fe-4S ferredoxin-type 1 domain. Residues Cys420, Cys423, Cys426, Cys430, Cys467, Cys478, Cys481, and Cys485 each contribute to the [4Fe-4S] cluster site. In terms of domain architecture, 4Fe-4S ferredoxin-type 2 spans 478-496 (CSNCVAVCSWNKVETWNHD).

This sequence belongs to the PceA family. It depends on [4Fe-4S] cluster as a cofactor. Corrinoid serves as cofactor. Post-translationally, predicted to be exported by the Tat system. The position of the signal peptide cleavage has been experimentally proven.

Its subcellular location is the cytoplasm. The protein resides in the cell membrane. The protein localises to the secreted. The catalysed reaction is trichloroethene + chloride + A + H(+) = tetrachloroethene + AH2. It catalyses the reaction trichloroethene + AH2 = (Z)-1,2-dichloroethene + chloride + A + H(+). With respect to regulation, pceT is required as a chaperone for prePceA maturation. In the absence or presence of exogenous vitamin B12, the intracellular corrinoid level decreases in fumarate-grown cells and the PceA precursor forms catalytically inactive, corrinoid-free multiprotein aggregates. Exogenous vitamin B12 is not incorporated into the PceA precursor, even though it affects the transposition of the pce gene cluster. In terms of biological role, catalyzes the reductive dechlorination of tetrachloroethene (PCE) to trichloroethene (TCE) and of trichloroethene to cis-1,2-dichloroethene (DCE). Can also use various chlorinated ethanes such as tetrachloroethane, pentachloroethane and hexachloroethane. Reduced methyl viologen can act as the artificial electron donor. This chain is Tetrachloroethene reductive dehalogenase, found in Desulfitobacterium hafniense (strain Y51).